A 1198-amino-acid polypeptide reads, in one-letter code: Spindle-defective protein 5 (1198 aa).

A compositionally biased stretch (polar residues) spans 1–10 (MEDNSVLNED). The segment at 1-45 (MEDNSVLNEDSNLEHVEGQPRRSMSQPVLNVEGDKRTSSTSATQQ) is disordered. Coiled-coil stretches lie at residues 67-381 (EENK…QLTG), 566-603 (HDVA…FEEI), 694-916 (KFTS…LSTS), 983-1035 (DELC…ENVP), and 1127-1175 (KNET…EFQD).

Its subcellular location is the cytoplasm. The protein localises to the cytoskeleton. It localises to the microtubule organizing center. It is found in the centrosome. Functionally, plays a central role in centrosome maturation and mitotic spindle assembly during the first division of the zygote. Required for the centrosomal localization of air-1 and zyg-9. Probably not required in late embryogenesis and during larval development. The protein is Spindle-defective protein 5 (spd-5) of Caenorhabditis elegans.